We begin with the raw amino-acid sequence, 309 residues long: Olfactory receptor 7A10 (309 aa).

Residues 1 to 25 (MKSWNNTIILEFLLLGISEEPELQA) are Extracellular-facing. An N-linked (GlcNAc...) asparagine glycan is attached at N5. The chain crosses the membrane as a helical span at residues 26–46 (FLFGLFLSMYLVTVLGNLLII). Over 47 to 54 (LATISDSH) the chain is Cytoplasmic. The chain crosses the membrane as a helical span at residues 55 to 75 (LHTPMYFFLSNLSFVDICFVS). Residues 76–99 (TTVPKMLVNIQTHNKVITYAGCIT) are Extracellular-facing. C97 and C189 are oxidised to a cystine. A helical membrane pass occupies residues 100 to 120 (QMCFFLLFVGLDNFLLTVMAY). At 121–139 (DRFVAICHPLHYMVIMNPQ) the chain is on the cytoplasmic side. A helical transmembrane segment spans residues 140–160 (LCGLLVLASWIMSVLNSMLQS). The Extracellular portion of the chain corresponds to 161-197 (LMVLPLPFCTHMEIPHFFCEINQVVHLACSDTFLNDI). A helical transmembrane segment spans residues 198–217 (VMYFAVALLGGGPLTGILYS). At 218–237 (YSKIVSSIRAISSAQGKYKA) the chain is on the cytoplasmic side. Residues 238 to 258 (FSTCASHLSVVSLFYGTCLGV) traverse the membrane as a helical segment. Topologically, residues 259 to 271 (YLSSAATHNSHTG) are extracellular. Residues 272–292 (AAASVMYTVVTPMLNPFIYSL) traverse the membrane as a helical segment. Residues 293–309 (RNKHIKGAMKTFFRGKQ) are Cytoplasmic-facing.

The protein belongs to the G-protein coupled receptor 1 family.

The protein resides in the cell membrane. Odorant receptor. This chain is Olfactory receptor 7A10 (OR7A10), found in Homo sapiens (Human).